The primary structure comprises 79 residues: Protein SNA2 (79 aa).

Residues 1–6 lie on the Cytoplasmic side of the membrane; that stretch reads MHARDW. The helical transmembrane segment at 7–27 threads the bilayer; the sequence is FLVFIAIFIPPLAVWLKRGFF. Topologically, residues 28-32 are vesicular; sequence TKDLL. Residues 33–53 traverse the membrane as a helical segment; the sequence is INFLLFLLGFFPGLIHALYVI. Over 54 to 79 the chain is Cytoplasmic; the sequence is SCHPYEENEARYSHLSSSDDNYGSLA. A phosphoserine mark is found at Ser-71 and Ser-77.

Belongs to the UPF0057 (PMP3) family.

It is found in the membrane. Its subcellular location is the lipid droplet. This chain is Protein SNA2 (SNA2), found in Saccharomyces cerevisiae (strain ATCC 204508 / S288c) (Baker's yeast).